A 419-amino-acid chain; its full sequence is Gamma-glutamyl phosphate reductase (419 aa).

Belongs to the gamma-glutamyl phosphate reductase family.

The protein resides in the cytoplasm. The enzyme catalyses L-glutamate 5-semialdehyde + phosphate + NADP(+) = L-glutamyl 5-phosphate + NADPH + H(+). The protein operates within amino-acid biosynthesis; L-proline biosynthesis; L-glutamate 5-semialdehyde from L-glutamate: step 2/2. Functionally, catalyzes the NADPH-dependent reduction of L-glutamate 5-phosphate into L-glutamate 5-semialdehyde and phosphate. The product spontaneously undergoes cyclization to form 1-pyrroline-5-carboxylate. The protein is Gamma-glutamyl phosphate reductase of Nitratidesulfovibrio vulgaris (strain DP4) (Desulfovibrio vulgaris).